The chain runs to 376 residues: Transforming growth factor beta-1 proprotein (376 aa).

The signal sequence occupies residues 1 to 22 (MRVESLLLALQCLLGFVHYSGA). Residues 23–68 (LSTCSPLDLELIKRKRIEAIRGQILSKLRLSKEPEVDEEKESQNIP) form a straightjacket domain region. Residues 69-258 (AELISVYNST…SLPLDGNNSS (190 aa)) form an arm domain region. 3 N-linked (GlcNAc...) asparagine glycosylation sites follow: asparagine 76, asparagine 125, and asparagine 167. Positions 214-238 (DPQKTFQLKIPGLVLVRGDTETLAV) are bowtie tail. Positions 230-232 (RGD) match the Cell attachment site motif. Intrachain disulfides connect cysteine 272–cysteine 280, cysteine 308–cysteine 373, and cysteine 312–cysteine 375.

It belongs to the TGF-beta family. In terms of assembly, latency-associated peptide: Homodimer; disulfide-linked. Latency-associated peptide: Interacts with Transforming growth factor beta-1 (TGF-beta-1) chain; interaction is non-covalent and maintains (TGF-beta-1) in a latent state; each Latency-associated peptide (LAP) monomer interacts with TGF-beta-1 in the other monomer. Transforming growth factor beta-1: Homodimer; disulfide-linked. Transforming growth factor beta-1: Interacts with TGF-beta receptors (tgfbr1 and tgfbr2), leading to signal transduction. Interacts with EFEMP2. Transforming growth factor beta-1 proprotein: The precursor proprotein is cleaved in the Golgi apparatus to form Transforming growth factor beta-1 (TGF-beta-1) and Latency-associated peptide (LAP) chains, which remain non-covalently linked, rendering TGF-beta-1 inactive.

The protein localises to the secreted. It is found in the extracellular space. The protein resides in the extracellular matrix. Its function is as follows. Transforming growth factor beta-1 proprotein: Precursor of the Latency-associated peptide (LAP) and Transforming growth factor beta-1 (TGF-beta-1) chains, which constitute the regulatory and active subunit of TGF-beta-1, respectively. In terms of biological role, required to maintain the Transforming growth factor beta-1 (TGF-beta-1) chain in a latent state during storage in extracellular matrix. Associates non-covalently with TGF-beta-1 and regulates its activation via interaction with 'milieu molecules', such as LTBP1, LRRC32/GARP and LRRC33/NRROS, that control activation of TGF-beta-1. Interaction with integrins (ITGAV:ITGB6 or ITGAV:ITGB8) results in distortion of the Latency-associated peptide chain and subsequent release of the active TGF-beta-1. Functionally, transforming growth factor beta-1: Multifunctional protein that regulates the growth and differentiation of various cell types and is involved in various processes, such as normal development, immune function, microglia function and responses to neurodegeneration. Activation into mature form follows different steps: following cleavage of the proprotein in the Golgi apparatus, Latency-associated peptide (LAP) and Transforming growth factor beta-1 (TGF-beta-1) chains remain non-covalently linked rendering TGF-beta-1 inactive during storage in extracellular matrix. At the same time, LAP chain interacts with 'milieu molecules', such as ltbp1, lrrc32/garp and lrrc33/nrros that control activation of TGF-beta-1 and maintain it in a latent state during storage in extracellular milieus. TGF-beta-1 is released from LAP by integrins (ITGAV:ITGB6 or ITGAV:ITGB8): integrin-binding to LAP stabilizes an alternative conformation of the LAP bowtie tail and results in distortion of the LAP chain and subsequent release of the active TGF-beta-1. Once activated following release of LAP, TGF-beta-1 acts by binding to TGF-beta receptors (tgfbr1 and tgfbr2), which transduce signal. While expressed by many cells types, TGF-beta-1 only has a very localized range of action within cell environment thanks to fine regulation of its activation by Latency-associated peptide chain (LAP) and 'milieu molecules'. Plays an important role in bone remodeling: acts as a potent stimulator of osteoblastic bone formation. Can promote either T-helper 17 cells (Th17) or regulatory T-cells (Treg) lineage differentiation in a concentration-dependent manner. Can induce epithelial-to-mesenchymal transition (EMT) and cell migration in various cell types. The polypeptide is Transforming growth factor beta-1 proprotein (tgfb1) (Cyprinus carpio (Common carp)).